The primary structure comprises 432 residues: D-amino acid dehydrogenase (432 aa).

Val-3–Trp-17 contributes to the FAD binding site.

Belongs to the DadA oxidoreductase family. FAD serves as cofactor.

It catalyses the reaction a D-alpha-amino acid + A + H2O = a 2-oxocarboxylate + AH2 + NH4(+). It participates in amino-acid degradation; D-alanine degradation; NH(3) and pyruvate from D-alanine: step 1/1. In terms of biological role, oxidative deamination of D-amino acids. The chain is D-amino acid dehydrogenase from Shigella boydii serotype 18 (strain CDC 3083-94 / BS512).